The following is a 532-amino-acid chain: Probable cytochrome c oxidase subunit 1 (532 aa).

8 helical membrane passes run I33 to F53, V74 to G94, G95 to L115, I118 to G138, M163 to I183, P200 to L220, L252 to V272, and I284 to V304. H79 serves as a coordination point for Fe(II)-heme a. Cu cation contacts are provided by H258 and Y262. H307 and H308 together coordinate Cu cation. Transmembrane regions (helical) follow at residues A318–F338 and M355–L375. H393 lines the heme a3 pocket. Transmembrane regions (helical) follow at residues F394–F414, F431–A451, and I473–L493. Residue H395 participates in Fe(II)-heme a binding.

The protein belongs to the heme-copper respiratory oxidase family.

It is found in the cell membrane. It catalyses the reaction 4 Fe(II)-[cytochrome c] + O2 + 8 H(+)(in) = 4 Fe(III)-[cytochrome c] + 2 H2O + 4 H(+)(out). Its pathway is energy metabolism; oxidative phosphorylation. Cytochrome c oxidase is the component of the respiratory chain that catalyzes the reduction of oxygen to water. Subunits 1-3 form the functional core of the enzyme complex. CO I is the catalytic subunit of the enzyme. Electrons originating in cytochrome c are transferred via the copper A center of subunit 2 and heme A of subunit 1 to the bimetallic center formed by heme A3 and copper B. The polypeptide is Probable cytochrome c oxidase subunit 1 (ctaD) (Rickettsia felis (strain ATCC VR-1525 / URRWXCal2) (Rickettsia azadi)).